The primary structure comprises 301 residues: tRNA dimethylallyltransferase 1 (301 aa).

An ATP-binding site is contributed by 10–17 (GPTASGKT). Position 12–17 (12–17 (TASGKT)) interacts with substrate. Positions 35–38 (DSRQ) are interaction with substrate tRNA.

The protein belongs to the IPP transferase family. Monomer. The cofactor is Mg(2+).

The enzyme catalyses adenosine(37) in tRNA + dimethylallyl diphosphate = N(6)-dimethylallyladenosine(37) in tRNA + diphosphate. Catalyzes the transfer of a dimethylallyl group onto the adenine at position 37 in tRNAs that read codons beginning with uridine, leading to the formation of N6-(dimethylallyl)adenosine (i(6)A). The protein is tRNA dimethylallyltransferase 1 of Geotalea uraniireducens (strain Rf4) (Geobacter uraniireducens).